Reading from the N-terminus, the 81-residue chain is Photosystem I iron-sulfur center (81 aa).

4Fe-4S ferredoxin-type domains lie at 2–31 (SHSV…MIPW) and 39–68 (IASA…VRVY). The [4Fe-4S] cluster site is built by Cys-11, Cys-14, Cys-17, Cys-21, Cys-48, Cys-51, Cys-54, and Cys-58.

In terms of assembly, the eukaryotic PSI reaction center is composed of at least 11 subunits. [4Fe-4S] cluster is required as a cofactor.

Its subcellular location is the plastid. It is found in the chloroplast thylakoid membrane. It carries out the reaction reduced [plastocyanin] + hnu + oxidized [2Fe-2S]-[ferredoxin] = oxidized [plastocyanin] + reduced [2Fe-2S]-[ferredoxin]. Apoprotein for the two 4Fe-4S centers FA and FB of photosystem I (PSI); essential for photochemical activity. FB is the terminal electron acceptor of PSI, donating electrons to ferredoxin. The C-terminus interacts with PsaA/B/D and helps assemble the protein into the PSI complex. Required for binding of PsaD and PsaE to PSI. PSI is a plastocyanin-ferredoxin oxidoreductase, converting photonic excitation into a charge separation, which transfers an electron from the donor P700 chlorophyll pair to the spectroscopically characterized acceptors A0, A1, FX, FA and FB in turn. This is Photosystem I iron-sulfur center from Acorus calamus (Sweet flag).